The following is a 182-amino-acid chain: NADH-quinone oxidoreductase subunit B (182 aa).

[4Fe-4S] cluster-binding residues include C46, C47, C112, and C141.

Belongs to the complex I 20 kDa subunit family. As to quaternary structure, NDH-1 is composed of 14 different subunits. Subunits NuoB, C, D, E, F, and G constitute the peripheral sector of the complex. Requires [4Fe-4S] cluster as cofactor.

Its subcellular location is the cell inner membrane. The catalysed reaction is a quinone + NADH + 5 H(+)(in) = a quinol + NAD(+) + 4 H(+)(out). Its function is as follows. NDH-1 shuttles electrons from NADH, via FMN and iron-sulfur (Fe-S) centers, to quinones in the respiratory chain. The immediate electron acceptor for the enzyme in this species is believed to be a menaquinone. Couples the redox reaction to proton translocation (for every two electrons transferred, four hydrogen ions are translocated across the cytoplasmic membrane), and thus conserves the redox energy in a proton gradient. The protein is NADH-quinone oxidoreductase subunit B of Flavobacterium johnsoniae (strain ATCC 17061 / DSM 2064 / JCM 8514 / BCRC 14874 / CCUG 350202 / NBRC 14942 / NCIMB 11054 / UW101) (Cytophaga johnsonae).